The chain runs to 169 residues: Cell division inhibitor SulA (169 aa).

Positions 106 to 112 are ftsZ binding; it reads ALRTGNY. Residues 162–169 are lon protease binding; sequence KIHSNLYH.

This sequence belongs to the SulA family. As to quaternary structure, interacts with FtsZ. Is rapidly cleaved and degraded by the Lon protease once DNA damage is repaired.

Component of the SOS system and an inhibitor of cell division. Accumulation of SulA causes rapid cessation of cell division and the appearance of long, non-septate filaments. In the presence of GTP, binds a polymerization-competent form of FtsZ in a 1:1 ratio, thus inhibiting FtsZ polymerization and therefore preventing it from participating in the assembly of the Z ring. This mechanism prevents the premature segregation of damaged DNA to daughter cells during cell division. The polypeptide is Cell division inhibitor SulA (Escherichia coli O45:K1 (strain S88 / ExPEC)).